The primary structure comprises 262 residues: MDDDNVLFHIRTLQGNVIKSLFDCLKEILHDVMLSFGPTGIRISALDGAKVSLVHLKLDSESFEEYKCEHTYELGVNVLNMFKLLRSAGSHDSILFRYLKNDPHMIELTIQNFEKNSLTKFNMKLIEIDSVEIEVGDIEFDTIIVMPANYFQRICRDMSDITDHLVIVKKGDEVSFNSDYTCVTDFASQKTIIGDSDNGQITCNNDTDYESKFSLKYLTSFCKASGMSSAVEIYLKESYPLILKYTVGSMGALKFVIAPILS.

The DNA-binding element occupies 67 to 86 (KCEHTYELGVNVLNMFKLLR).

It belongs to the PCNA family.

Functionally, sliding clamp subunit. Responsible for tethering the catalytic subunit of DNA polymerase to DNA during high-speed replication. In Chlorella (PBCV-1), this protein is Probable DNA polymerase sliding clamp 1.